A 347-amino-acid polypeptide reads, in one-letter code: tRNA pseudouridine synthase D (347 aa).

The active-site Nucleophile is Asp-81. The TRUD domain occupies 158 to 304 (GVPNYFGNQR…MRHDRRAIAL (147 aa)).

It belongs to the pseudouridine synthase TruD family.

The enzyme catalyses uridine(13) in tRNA = pseudouridine(13) in tRNA. Functionally, responsible for synthesis of pseudouridine from uracil-13 in transfer RNAs. This is tRNA pseudouridine synthase D from Vibrio vulnificus (strain CMCP6).